The primary structure comprises 1113 residues: Antigenic protein P1 (1113 aa).

The chain crosses the membrane as a helical span at residues 7–27 (IIAVVAIASAIVTGVVVIVVV). N-linked (GlcNAc...) asparagine glycans are attached at residues N121, N207, N225, N233, N274, N533, N576, N622, N675, N679, N730, N753, N880, N899, N907, N972, and N995. The region spanning 159–473 (VFGQRAVAWA…SYVNMAHAFG (315 aa)) is the Peptidase M60 domain. The region spanning 648–800 (LDPHQVEYEV…TEESSVDVSK (153 aa)) is the PA14 domain.

It localises to the membrane. The protein is Antigenic protein P1 of Entamoeba histolytica (strain ATCC 30459 / HM-1:IMSS / ABRM).